A 161-amino-acid polypeptide reads, in one-letter code: N5-carboxyaminoimidazole ribonucleotide mutase (161 aa).

Substrate contacts are provided by S9, D12, and R39.

It belongs to the AIR carboxylase family. Class I subfamily.

The catalysed reaction is 5-carboxyamino-1-(5-phospho-D-ribosyl)imidazole + H(+) = 5-amino-1-(5-phospho-D-ribosyl)imidazole-4-carboxylate. It participates in purine metabolism; IMP biosynthesis via de novo pathway; 5-amino-1-(5-phospho-D-ribosyl)imidazole-4-carboxylate from 5-amino-1-(5-phospho-D-ribosyl)imidazole (N5-CAIR route): step 2/2. Functionally, catalyzes the conversion of N5-carboxyaminoimidazole ribonucleotide (N5-CAIR) to 4-carboxy-5-aminoimidazole ribonucleotide (CAIR). This chain is N5-carboxyaminoimidazole ribonucleotide mutase, found in Vibrio vulnificus (strain CMCP6).